Consider the following 611-residue polypeptide: Menin (611 aa).

Residues 214 to 390 (GVAERSWLYL…SLLETGEERT (177 aa)) form an interaction with FANCD2 region. Residues 460–553 (REAEAAEAEE…SPPPEGPVLT (94 aa)) are disordered. The segment covering 484-500 (RRESKPEEPPPPKKPAL) has biased composition (basic and acidic residues). A phosphoserine mark is found at Ser487 and Ser544. Phosphothreonine is present on Thr595.

Component of the MLL-HCF complex, at least composed of KMT2A/MLL1, MEN1, ASH2L, RBBP5, DPY30, WDR5, HCFC1 and HCFC2. Component of the menin-associated histone methyltransferase complex, at least composed of KMT2B/MLL4, MEN1, ASH2L, RBBP5, DPY30 and WDR5. Interacts with POLR2B. Interacts with POLR2A phosphorylated at 'Ser-5', but not with the unphosphorylated, nor 'Ser-2' phosphorylated POLR2A forms. Interacts with FANCD2 and DBF4. Interacts with SMAD3, but not with SMAD2, nor SMAD4. Directly interacts with NFKB1, NFKB2 and RELA. Interacts with JUND (via MBM motif); inhibits the interaction of JUND with MAPK10 and the phosphorylation of JUND by MAP kinases MAPK8 and MAPK10. Interacts with KMT2A (via MBM motif). The KMT2A-MEN1 complex interacts with PSIP1 with a greater affinity as MEN1 enhances interaction of KMT2A with PSIP1. In terms of tissue distribution, widely expressed, with high levels in hippocampus, cerebral cortex, testis and thymus (at protein level). Also expressed at high levels in pancreatic islets, ovary and bone marrow. In the brain, highest expression in hippocampus pyramidal nerve cells (at protein level). In the testis, may be expressed in spermatogonia (at protein level). Low expression, if any, in skeletal muscle.

The protein resides in the nucleus. Essential component of a MLL/SET1 histone methyltransferase (HMT) complex, a complex that specifically methylates 'Lys-4' of histone H3 (H3K4). Functions as a transcriptional regulator. Binds to the TERT promoter and represses telomerase expression. Plays a role in TGFB1-mediated inhibition of cell-proliferation, possibly regulating SMAD3 transcriptional activity. Represses JUND-mediated transcriptional activation on AP1 sites, as well as that mediated by NFKB subunit RELA. Positively regulates HOXC8 and HOXC6 gene expression. May be involved in normal hematopoiesis through the activation of HOXA9 expression. May be involved in DNA repair. The chain is Menin (Men1) from Mus musculus (Mouse).